The sequence spans 689 residues: Glycine--tRNA ligase beta subunit (689 aa).

This sequence belongs to the class-II aminoacyl-tRNA synthetase family. As to quaternary structure, tetramer of two alpha and two beta subunits.

Its subcellular location is the cytoplasm. It carries out the reaction tRNA(Gly) + glycine + ATP = glycyl-tRNA(Gly) + AMP + diphosphate. This is Glycine--tRNA ligase beta subunit from Pectobacterium atrosepticum (strain SCRI 1043 / ATCC BAA-672) (Erwinia carotovora subsp. atroseptica).